Here is an 833-residue protein sequence, read N- to C-terminus: DNA ligase (833 aa).

NAD(+) contacts are provided by residues 35–39 (DADYD), 84–85 (SL), and glutamate 115. Lysine 117 functions as the N6-AMP-lysine intermediate in the catalytic mechanism. Arginine 138, glutamate 175, lysine 292, and lysine 316 together coordinate NAD(+). Cysteine 410, cysteine 413, cysteine 428, and cysteine 434 together coordinate Zn(2+). The 84-residue stretch at 750–833 (LQTGPLDGQT…AFLGDHGQQP (84 aa)) folds into the BRCT domain.

It belongs to the NAD-dependent DNA ligase family. LigA subfamily. Mg(2+) serves as cofactor. The cofactor is Mn(2+).

It catalyses the reaction NAD(+) + (deoxyribonucleotide)n-3'-hydroxyl + 5'-phospho-(deoxyribonucleotide)m = (deoxyribonucleotide)n+m + AMP + beta-nicotinamide D-nucleotide.. In terms of biological role, DNA ligase that catalyzes the formation of phosphodiester linkages between 5'-phosphoryl and 3'-hydroxyl groups in double-stranded DNA using NAD as a coenzyme and as the energy source for the reaction. It is essential for DNA replication and repair of damaged DNA. The polypeptide is DNA ligase (Xanthomonas euvesicatoria pv. vesicatoria (strain 85-10) (Xanthomonas campestris pv. vesicatoria)).